A 471-amino-acid chain; its full sequence is Ribulose bisphosphate carboxylase large chain (471 aa).

Residue K5 is modified to N6,N6,N6-trimethyllysine. The substrate site is built by N114 and T164. K166 serves as the catalytic Proton acceptor. K168 is a substrate binding site. 3 residues coordinate Mg(2+): K192, D194, and E195. The residue at position 192 (K192) is an N6-carboxylysine. Residue H285 is the Proton acceptor of the active site. 3 residues coordinate substrate: R286, H318, and S370.

It belongs to the RuBisCO large chain family. Type I subfamily. In terms of assembly, heterohexadecamer of 8 large chains and 8 small chains; disulfide-linked. The disulfide link is formed within the large subunit homodimers. Mg(2+) is required as a cofactor. In terms of processing, the disulfide bond which can form in the large chain dimeric partners within the hexadecamer appears to be associated with oxidative stress and protein turnover.

The protein localises to the plastid. It localises to the chloroplast. It catalyses the reaction 2 (2R)-3-phosphoglycerate + 2 H(+) = D-ribulose 1,5-bisphosphate + CO2 + H2O. The enzyme catalyses D-ribulose 1,5-bisphosphate + O2 = 2-phosphoglycolate + (2R)-3-phosphoglycerate + 2 H(+). In terms of biological role, ruBisCO catalyzes two reactions: the carboxylation of D-ribulose 1,5-bisphosphate, the primary event in carbon dioxide fixation, as well as the oxidative fragmentation of the pentose substrate in the photorespiration process. Both reactions occur simultaneously and in competition at the same active site. The sequence is that of Ribulose bisphosphate carboxylase large chain from Strychnos nux-vomica (Poison nut).